Reading from the N-terminus, the 384-residue chain is S-adenosylmethionine synthase (384 aa).

His-15 provides a ligand contact to ATP. Asp-17 contacts Mg(2+). Glu-43 contacts K(+). 2 residues coordinate L-methionine: Glu-56 and Gln-99. The interval 99–109 (QSPDINQGVDR) is flexible loop. ATP contacts are provided by residues 164–166 (DAK), 230–231 (RF), Asp-239, 245–246 (RK), Ala-262, and Lys-266. Asp-239 serves as a coordination point for L-methionine. Lys-270 serves as a coordination point for L-methionine.

The protein belongs to the AdoMet synthase family. Homotetramer; dimer of dimers. The cofactor is Mg(2+). K(+) is required as a cofactor.

It localises to the cytoplasm. The enzyme catalyses L-methionine + ATP + H2O = S-adenosyl-L-methionine + phosphate + diphosphate. The protein operates within amino-acid biosynthesis; S-adenosyl-L-methionine biosynthesis; S-adenosyl-L-methionine from L-methionine: step 1/1. Catalyzes the formation of S-adenosylmethionine (AdoMet) from methionine and ATP. The overall synthetic reaction is composed of two sequential steps, AdoMet formation and the subsequent tripolyphosphate hydrolysis which occurs prior to release of AdoMet from the enzyme. The polypeptide is S-adenosylmethionine synthase (Salmonella gallinarum (strain 287/91 / NCTC 13346)).